Consider the following 166-residue polypeptide: Putative 4-hydroxy-4-methyl-2-oxoglutarate aldolase (166 aa).

Residues 74 to 77 (GDQI) and Arg-96 contribute to the substrate site. Residue Asp-97 coordinates a divalent metal cation.

The protein belongs to the class II aldolase/RraA-like family. As to quaternary structure, homotrimer. The cofactor is a divalent metal cation.

The catalysed reaction is 4-hydroxy-4-methyl-2-oxoglutarate = 2 pyruvate. It catalyses the reaction oxaloacetate + H(+) = pyruvate + CO2. In terms of biological role, catalyzes the aldol cleavage of 4-hydroxy-4-methyl-2-oxoglutarate (HMG) into 2 molecules of pyruvate. Also contains a secondary oxaloacetate (OAA) decarboxylase activity due to the common pyruvate enolate transition state formed following C-C bond cleavage in the retro-aldol and decarboxylation reactions. This Xanthomonas axonopodis pv. citri (strain 306) protein is Putative 4-hydroxy-4-methyl-2-oxoglutarate aldolase.